We begin with the raw amino-acid sequence, 222 residues long: Uclacyanin-3 (222 aa).

The N-terminal stretch at 1 to 21 (MGSTVAAALLLFLAAVPAVFA) is a signal peptide. Residues 22-120 (ATFKVGDISG…GMKLAVPVLA (99 aa)) form the Phytocyanin domain. 4 residues coordinate Cu cation: H61, C102, H107, and M112. A disulfide bridge connects residues C74 and C108. The segment at 121-198 (AAPSPSTPSS…APLPPSLSPN (78 aa)) is disordered. 2 stretches are compositionally biased toward pro residues: residues 125-172 (PSTP…PSAS) and 185-195 (TPPPAPLPPSL). The GPI-anchor amidated asparagine moiety is linked to residue N198. Residues 199–222 (AASKGVMSYGIIGVTMILMYAVMT) constitute a propeptide, removed in mature form.

The protein resides in the cell membrane. Functionally, probably acts as an electron carrier involved in oxygen activation and/or lignin formation. This Arabidopsis thaliana (Mouse-ear cress) protein is Uclacyanin-3 (UCC3).